The chain runs to 167 residues: 2-C-methyl-D-erythritol 2,4-cyclodiphosphate synthase (167 aa).

The a divalent metal cation site is built by Asp8 and His10. 4-CDP-2-C-methyl-D-erythritol 2-phosphate-binding positions include 8–10 (DIH) and 34–35 (HS). A divalent metal cation is bound at residue His42. 4-CDP-2-C-methyl-D-erythritol 2-phosphate is bound by residues 56 to 58 (DIG) and Arg142.

The protein belongs to the IspF family. Homotrimer. A divalent metal cation serves as cofactor.

It carries out the reaction 4-CDP-2-C-methyl-D-erythritol 2-phosphate = 2-C-methyl-D-erythritol 2,4-cyclic diphosphate + CMP. It participates in isoprenoid biosynthesis; isopentenyl diphosphate biosynthesis via DXP pathway; isopentenyl diphosphate from 1-deoxy-D-xylulose 5-phosphate: step 4/6. Involved in the biosynthesis of isopentenyl diphosphate (IPP) and dimethylallyl diphosphate (DMAPP), two major building blocks of isoprenoid compounds. Catalyzes the conversion of 4-diphosphocytidyl-2-C-methyl-D-erythritol 2-phosphate (CDP-ME2P) to 2-C-methyl-D-erythritol 2,4-cyclodiphosphate (ME-CPP) with a corresponding release of cytidine 5-monophosphate (CMP). The polypeptide is 2-C-methyl-D-erythritol 2,4-cyclodiphosphate synthase (Buchnera aphidicola subsp. Schizaphis graminum (strain Sg)).